Reading from the N-terminus, the 336-residue chain is DNA repair protein RAD51 homolog A (336 aa).

The region spanning 45–74 (TVEAVAYAPKKELLNIKGISEAKAEKILAE) is the HhH domain. 124–131 (GEFRTGKT) contributes to the ATP binding site. Residues 242-257 (LARFLRMLLRLADEFG) carry the Nuclear export signal motif.

It belongs to the RecA family. RAD51 subfamily. Forms linear homooligomers, giving rise to a RAD51 nucleoprotein filament, which is essential for strand-pairing reactions during DNA recombination.

It localises to the nucleus. The protein localises to the cytoplasm. It is found in the chromosome. Its function is as follows. Plays an important role in homologous strand exchange, a key step in DNA repair through homologous recombination (HR). Binds to single-stranded DNA in an ATP-dependent manner to form nucleoprotein filaments which are essential for the homology search and strand exchange. Catalyzes the recognition of homology and strand exchange between homologous DNA partners to form a joint molecule between a processed DNA break and the repair template. Recruited to resolve stalled replication forks during replication stress. Also involved in interstrand cross-link repair. This is DNA repair protein RAD51 homolog A (rad51-a) from Xenopus laevis (African clawed frog).